Here is a 343-residue protein sequence, read N- to C-terminus: MLDLSLPSGLRDLLPDHSAHLAELSAKLQEVFSQFGYRRLFLPTLERLDVVERGLSAAALADVMKFVEPGSGEVVAIRPDITPQIARLYAARPDALPSPARLCYDGPVLRAREARAGRPREVYQAGVELLGAGGASADAEALVVLARALERVGLGSAVVEVGHARFAHAVIDAAGLAPKARGAAWDALSRKDEGALAALARRARGSAGARAALPELATLYGDGALARARALARQVPGAAAALGEVEAALRLARRRGVEAVSVDLGETRGLGYYTGVTFAGYAPGAGSAVAAGGRYDELLARFGRPGPAIGFAVDLEFATQALERANGRAKRPARPRRSPPRPR.

The tract at residues 324–343 (RANGRAKRPARPRRSPPRPR) is disordered. Positions 327–343 (GRAKRPARPRRSPPRPR) are enriched in basic residues.

It belongs to the class-II aminoacyl-tRNA synthetase family. HisZ subfamily. Heteromultimer composed of HisG and HisZ subunits.

It localises to the cytoplasm. It participates in amino-acid biosynthesis; L-histidine biosynthesis; L-histidine from 5-phospho-alpha-D-ribose 1-diphosphate: step 1/9. In terms of biological role, required for the first step of histidine biosynthesis. May allow the feedback regulation of ATP phosphoribosyltransferase activity by histidine. This is ATP phosphoribosyltransferase regulatory subunit from Anaeromyxobacter sp. (strain Fw109-5).